The following is a 125-amino-acid chain: Ribosome-binding factor A (125 aa).

Belongs to the RbfA family. In terms of assembly, monomer. Binds 30S ribosomal subunits, but not 50S ribosomal subunits or 70S ribosomes.

The protein resides in the cytoplasm. Functionally, one of several proteins that assist in the late maturation steps of the functional core of the 30S ribosomal subunit. Associates with free 30S ribosomal subunits (but not with 30S subunits that are part of 70S ribosomes or polysomes). Required for efficient processing of 16S rRNA. May interact with the 5'-terminal helix region of 16S rRNA. The polypeptide is Ribosome-binding factor A (Methylobacillus flagellatus (strain ATCC 51484 / DSM 6875 / VKM B-1610 / KT)).